Consider the following 785-residue polypeptide: Terminal nucleotidyltransferase 4A (785 aa).

Residues 56 to 184 are disordered; it reads AAGRAAPAAG…QFHPGRRKRE (129 aa). Positions 68 to 85 are enriched in pro residues; the sequence is GPAPAASSPPPAPGPAAL. Low complexity-rich tracts occupy residues 86-98 and 106-145; these read PPAL…PAAD and SPSL…AGSG. Residues aspartate 290 and aspartate 292 each contribute to the Mg(2+) site. Positions 353, 378, 396, and 397 each coordinate ATP. The region spanning 421–480 is the PAP-associated domain; that stretch reads NLGMLLVEFFELYGRNFNYLKTGIRIKEGGAYIAKEEIMKAMTSGYRPSMLCIEDPLLPG. 2 residues coordinate ATP: asparagine 481 and arginine 485. Low complexity predominate over residues 593–611; it reads PQLLSSGSSASSVSSLSGS. Disordered regions lie at residues 593–625 and 731–785; these read PQLL…TPSV and KGSH…SLSR. A compositionally biased stretch (basic residues) spans 757-774; that stretch reads RGHHQYNRTGWRRKKHAH.

Belongs to the DNA polymerase type-B-like family. In terms of assembly, component of a nuclear TRAMP-like complex, an ATP-dependent exosome regulatory complex consisting of a helicase (MTREX), an oligadenylate polymerase (TENT4B or TENT4A), and a substrate specific RNA-binding factor (ZCCHC7 or ZCCHC8). Several TRAMP-like complexes exist with specific compositions and are associated with nuclear, or nucleolar RNA exosomes. The cofactor is Mg(2+). Mn(2+) is required as a cofactor.

Its subcellular location is the cytoplasm. The protein localises to the nucleus. It localises to the nucleoplasm. The enzyme catalyses RNA(n) + ATP = RNA(n)-3'-adenine ribonucleotide + diphosphate. In terms of biological role, terminal nucleotidyltransferase that catalyzes preferentially the transfer of ATP and GTP on RNA 3' poly(A) tail creating a heterogeneous 3' poly(A) tail leading to mRNAs stabilization by protecting mRNAs from active deadenylation. Also functions as a catalytic subunit of a TRAMP-like complex which has a poly(A) RNA polymerase activity and is involved in a post-transcriptional quality control mechanism. Polyadenylation with short oligo(A) tails is required for the degradative activity of the exosome on several of its nuclear RNA substrates. Has no terminal uridylyltransferase activity, and does not play a role in replication-dependent histone mRNA degradation via uridylation. The sequence is that of Terminal nucleotidyltransferase 4A from Mus musculus (Mouse).